Here is a 479-residue protein sequence, read N- to C-terminus: GTPase Obg (479 aa).

One can recognise an Obg domain in the interval 2 to 159 (PRFVDRVVIH…RDLTLELKTV (158 aa)). The 181-residue stretch at 160-340 (ADVGLVGFPS…LIFGLWQMVS (181 aa)) folds into the OBG-type G domain. Residues 166–173 (GFPSAGKS), 191–195 (FTTLV), 212–215 (DVPG), 292–295 (NKID), and 321–323 (STV) each bind GTP. Positions 173 and 193 each coordinate Mg(2+). In terms of domain architecture, OCT spans 358–436 (PVPVDDSGFD…IGEMTFDWEP (79 aa)). The segment at 438–479 (TPAGGHVAMSGRGTDVRLERSDRVGAAERKAARRQRRERDDD) is disordered. Residues 451–467 (TDVRLERSDRVGAAERK) are compositionally biased toward basic and acidic residues.

The protein belongs to the TRAFAC class OBG-HflX-like GTPase superfamily. OBG GTPase family. In terms of assembly, monomer. Mg(2+) is required as a cofactor.

The protein localises to the cytoplasm. Its function is as follows. An essential GTPase which binds GTP, GDP and possibly (p)ppGpp with moderate affinity, with high nucleotide exchange rates and a fairly low GTP hydrolysis rate. Plays a role in control of the cell cycle, stress response, ribosome biogenesis and in those bacteria that undergo differentiation, in morphogenesis control. The chain is GTPase Obg from Mycobacterium marinum (strain ATCC BAA-535 / M).